The sequence spans 536 residues: Testis-specific protein 10-interacting protein (536 aa).

Disordered stretches follow at residues 1–94 (MLNT…LFSS), 185–234 (SQGL…PGQG), and 246–305 (MEEE…FKGP). Residues 48–64 (SGDSLQSQSCQQQRSYS) are compositionally biased toward low complexity. A compositionally biased stretch (basic residues) spans 71–83 (KERKPRRRNKKGR). Residues 375 to 451 (QAWEQQQLKE…LQGIQHRVQA (77 aa)) adopt a coiled-coil conformation. The segment at 491–536 (GNAEGIPRKHRSYRSFGVEMESSPQSPPKTEPTSSQPGRHPSPTLD) is disordered.

This is Testis-specific protein 10-interacting protein (Tsga10ip) from Rattus norvegicus (Rat).